Reading from the N-terminus, the 78-residue chain is Translational regulator CsrA (78 aa).

Belongs to the CsrA/RsmA family. Homodimer; the beta-strands of each monomer intercalate to form a hydrophobic core, while the alpha-helices form wings that extend away from the core.

It is found in the cytoplasm. In terms of biological role, a translational regulator that binds mRNA to regulate translation initiation and/or mRNA stability. Usually binds in the 5'-UTR at or near the Shine-Dalgarno sequence preventing ribosome-binding, thus repressing translation. Its main target seems to be the major flagellin gene, while its function is anatagonized by FliW. The protein is Translational regulator CsrA of Nitratidesulfovibrio vulgaris (strain ATCC 29579 / DSM 644 / CCUG 34227 / NCIMB 8303 / VKM B-1760 / Hildenborough) (Desulfovibrio vulgaris).